The sequence spans 331 residues: Nucleotide sugar transporter SLC35B4 (331 aa).

A run of 11 helical transmembrane segments spans residues 4–24 (ALAV…LELL), 30–50 (GCGN…GFLF), 59–79 (PAIP…VSVV), 92–112 (LHMI…IIIL), 117–137 (SIFK…CTFM), 153–173 (GFQA…ALLM), 201–221 (ALPL…AVLF), 229–249 (IPVI…NIIT), 251–267 (YVCI…CASL), 268–288 (TVTL…ILYF), and 291–311 (PFTL…LMYT). Positions 326 to 331 (KDSKKN) match the Mediates endoplasmic reticulum retention motif.

The protein belongs to the nucleotide-sugar transporter family. SLC35B subfamily.

The protein resides in the endoplasmic reticulum membrane. It carries out the reaction UDP-N-acetyl-alpha-D-glucosamine(in) + UDP-alpha-D-glucuronate(out) = UDP-N-acetyl-alpha-D-glucosamine(out) + UDP-alpha-D-glucuronate(in). It catalyses the reaction UDP-alpha-D-xylose(in) + UDP-alpha-D-glucuronate(out) = UDP-alpha-D-xylose(out) + UDP-alpha-D-glucuronate(in). In terms of biological role, antiporter that transports nucleotide sugars across the endoplasmic reticulum (ER) membrane in exchange for another nucleotide sugar. May couple UDP-alpha-D-glucuronate (UDP-GlcA) or UDP-alpha-D-xylose (UDP-Xyl) efflux to UDP-alpha-D-glucuronate (UDP-GlcA) influx into the ER lumen, which in turn stimulates glucuronidation and excretion of endobiotics and xenobiotics. This chain is Nucleotide sugar transporter SLC35B4 (SLC35B4), found in Pongo abelii (Sumatran orangutan).